The following is a 194-amino-acid chain: Isopentenyl-diphosphate Delta-isomerase (194 aa).

Mn(2+)-binding residues include His23 and His30. Residues Pro28–Gln162 enclose the Nudix hydrolase domain. Residue Cys65 is part of the active site. Mn(2+) is bound at residue His67. Glu85 provides a ligand contact to Mg(2+). Positions 112 and 114 each coordinate Mn(2+). Residue Glu114 is part of the active site.

The protein belongs to the IPP isomerase type 1 family. It depends on Mg(2+) as a cofactor. The cofactor is Mn(2+).

The protein resides in the cytoplasm. It carries out the reaction isopentenyl diphosphate = dimethylallyl diphosphate. It functions in the pathway isoprenoid biosynthesis; dimethylallyl diphosphate biosynthesis; dimethylallyl diphosphate from isopentenyl diphosphate: step 1/1. Catalyzes the 1,3-allylic rearrangement of the homoallylic substrate isopentenyl (IPP) to its highly electrophilic allylic isomer, dimethylallyl diphosphate (DMAPP). In Saccharopolyspora erythraea (strain ATCC 11635 / DSM 40517 / JCM 4748 / NBRC 13426 / NCIMB 8594 / NRRL 2338), this protein is Isopentenyl-diphosphate Delta-isomerase.